Here is a 453-residue protein sequence, read N- to C-terminus: Bifunctional protein GlmU (453 aa).

The segment at 1–225 is pyrophosphorylase; the sequence is MNIVILAAGT…EWETLGVNSK (225 aa). UDP-N-acetyl-alpha-D-glucosamine is bound by residues 6-9, Lys-20, Gln-71, 76-77, 98-100, Gly-135, Glu-150, Asn-165, and Asn-223; these read LAAG, GT, and YGD. Asp-100 contacts Mg(2+). Asn-223 provides a ligand contact to Mg(2+). A linker region spans residues 226–246; the sequence is AQLAELERIHQRNLADALLAA. The segment at 247–453 is N-acetyltransferase; it reads GVTLADPARI…GYVRPVKKKS (207 aa). Arg-329 and Lys-347 together coordinate UDP-N-acetyl-alpha-D-glucosamine. Catalysis depends on His-359, which acts as the Proton acceptor. UDP-N-acetyl-alpha-D-glucosamine contacts are provided by Tyr-362 and Asn-373. Residues Ala-376, 382 to 383, Ser-401, and Ala-419 each bind acetyl-CoA; that span reads NY.

In the N-terminal section; belongs to the N-acetylglucosamine-1-phosphate uridyltransferase family. The protein in the C-terminal section; belongs to the transferase hexapeptide repeat family. In terms of assembly, homotrimer. Requires Mg(2+) as cofactor.

The protein resides in the cytoplasm. It carries out the reaction alpha-D-glucosamine 1-phosphate + acetyl-CoA = N-acetyl-alpha-D-glucosamine 1-phosphate + CoA + H(+). It catalyses the reaction N-acetyl-alpha-D-glucosamine 1-phosphate + UTP + H(+) = UDP-N-acetyl-alpha-D-glucosamine + diphosphate. It functions in the pathway nucleotide-sugar biosynthesis; UDP-N-acetyl-alpha-D-glucosamine biosynthesis; N-acetyl-alpha-D-glucosamine 1-phosphate from alpha-D-glucosamine 6-phosphate (route II): step 2/2. It participates in nucleotide-sugar biosynthesis; UDP-N-acetyl-alpha-D-glucosamine biosynthesis; UDP-N-acetyl-alpha-D-glucosamine from N-acetyl-alpha-D-glucosamine 1-phosphate: step 1/1. Its pathway is bacterial outer membrane biogenesis; LPS lipid A biosynthesis. In terms of biological role, catalyzes the last two sequential reactions in the de novo biosynthetic pathway for UDP-N-acetylglucosamine (UDP-GlcNAc). The C-terminal domain catalyzes the transfer of acetyl group from acetyl coenzyme A to glucosamine-1-phosphate (GlcN-1-P) to produce N-acetylglucosamine-1-phosphate (GlcNAc-1-P), which is converted into UDP-GlcNAc by the transfer of uridine 5-monophosphate (from uridine 5-triphosphate), a reaction catalyzed by the N-terminal domain. The sequence is that of Bifunctional protein GlmU from Burkholderia mallei (strain NCTC 10247).